Here is an 855-residue protein sequence, read N- to C-terminus: Suppressor of tumorigenicity 14 protein homolog (855 aa).

The tract at residues 1 to 21 (MKSERARRGAGGSGDLGAGFK) is disordered. The Cytoplasmic segment spans residues 1-55 (MKSERARRGAGGSGDLGAGFKYTSRPENMNGCEEGVEFLPANNSSKVEKGGPRRW). Residue S13 is modified to Phosphoserine. The chain crosses the membrane as a helical; Signal-anchor for type II membrane protein span at residues 56–76 (VVLMAVLAAFLALSLLAGLLA). The Extracellular segment spans residues 77 to 855 (WHFQDRNVRV…RDWIKAQIGV (779 aa)). The SEA domain occupies 86–203 (VQKIFNGYLS…TSVVAFPSDP (118 aa)). N-linked (GlcNAc...) asparagine glycosylation occurs at N109. A disulfide bridge connects residues C214 and C244. CUB domains are found at residues 214–334 (CSFA…FFQL) and 340–447 (CGGY…FLSF). N-linked (GlcNAc...) asparagine glycosylation is found at N302 and N365. Disulfide bonds link C340-C366, C397-C410, C453-C464, C459-C477, C471-C486, C488-C501, C496-C514, C508-C523, C525-C537, C532-C550, C544-C559, C567-C579, C574-C593, C587-C602, and C641-C657. 4 LDL-receptor class A domains span residues 452–487 (PCPGSFMCNTGRCIRKELRCDGWADCTDYSDELDCK), 487–524 (KCNATYQFTCRDKFCKPLFWVCDSVKDCEDGSDEEGCS), 524–560 (SCPPNTFKCGNGKCLPQSQQCDRKDDCGDGSDEAKCQ), and 566–603 (PCTEHTHRCLNGLCVDKSNPQCDGNEDCTDGSDEKDCD). N-linked (GlcNAc...) asparagine glycosylation occurs at N489. A Peptidase S1 domain is found at 615 to 854 (VVGGENSDQG…FRDWIKAQIG (240 aa)). Residues H656 and D711 each act as charge relay system in the active site. An N-linked (GlcNAc...) asparagine glycan is attached at N772. 2 cysteine pairs are disulfide-bonded: C776/C790 and C801/C830. S805 (charge relay system) is an active-site residue.

Belongs to the peptidase S1 family. As to quaternary structure, interacts with CDCP1. May interact with TMEFF1.

The protein localises to the membrane. It catalyses the reaction Cleaves various synthetic substrates with Arg or Lys at the P1 position and prefers small side-chain amino acids, such as Ala and Gly, at the P2 position.. In terms of biological role, exhibits trypsin-like activity as defined by cleavage of synthetic substrates with Arg or Lys as the P1 site. Involved in the terminal differentiation of keratinocytes through prostasin (PRSS8) activation and filaggrin (FLG) processing. Proteolytically cleaves and therefore activates TMPRSS13. This Bos taurus (Bovine) protein is Suppressor of tumorigenicity 14 protein homolog (ST14).